Here is a 919-residue protein sequence, read N- to C-terminus: Protein phosphatase 1 regulatory subunit 37 (919 aa).

LRR repeat units lie at residues 340 to 361 (SLQYLDARNTPLLDHSAPFVAR), 368 to 388 (SLTVLHLENSGISGRPLMLLA), 396 to 417 (NLRELYLAENKLNGLQDSAQLG), 425 to 445 (NIQILDLRNNHILDSGLAYVC), 454 to 474 (GLVTLVLWNNQLTHNGMGYLA), and 482 to 502 (SLETLNLGHNAVGNEGVHKLK). 2 disordered regions span residues 626-716 (ATED…TIPS) and 790-866 (APSQ…APLP). Residues 631–640 (THEEEEEEEA) show a composition bias toward acidic residues. Over residues 641–658 (SPLKKIEEETTDALKDAT) the composition is skewed to basic and acidic residues. The segment covering 677 to 690 (PQDDSDSDTEDEET) has biased composition (acidic residues). The span at 691–701 (PTNTSLTSTSP) shows a compositional bias: low complexity. Polar residues-rich tracts occupy residues 791 to 801 (PSQTQNSTQPT) and 811 to 837 (DAQQEDSVSTSTPSLDANIDQTQLTES). Positions 833–861 (QLTESVSEEEQKKAETLNNEADINEDANT) form a coiled coil.

It belongs to the PPP1R37 family.

In terms of biological role, may inhibit phosphatase activity of protein phosphatase 1 (PP1) complexes. The chain is Protein phosphatase 1 regulatory subunit 37 (ppp1r37) from Danio rerio (Zebrafish).